We begin with the raw amino-acid sequence, 801 residues long: uncharacterized protein (801 aa).

The PE domain occupies 1–93 (MSWVMVSPEL…GGAYAAAEAA (93 aa)).

The protein belongs to the mycobacterial PE family. PGRS subfamily.

This is an uncharacterized protein from Mycobacterium tuberculosis (strain ATCC 25618 / H37Rv).